Here is a 360-residue protein sequence, read N- to C-terminus: Mannonate dehydratase (360 aa).

The protein belongs to the mannonate dehydratase family. It depends on Fe(2+) as a cofactor. The cofactor is Mn(2+).

It carries out the reaction D-mannonate = 2-dehydro-3-deoxy-D-gluconate + H2O. It functions in the pathway carbohydrate metabolism; pentose and glucuronate interconversion. Functionally, catalyzes the dehydration of D-mannonate. This chain is Mannonate dehydratase, found in Thermotoga sp. (strain RQ2).